The following is a 285-amino-acid chain: Phosphatidylserine decarboxylase proenzyme (285 aa).

Catalysis depends on charge relay system; for autoendoproteolytic cleavage activity residues Asp-89, His-146, and Ser-252. The active-site Schiff-base intermediate with substrate; via pyruvic acid; for decarboxylase activity is the Ser-252. Position 252 is a pyruvic acid (Ser); by autocatalysis (Ser-252).

Belongs to the phosphatidylserine decarboxylase family. PSD-B subfamily. Prokaryotic type I sub-subfamily. Heterodimer of a large membrane-associated beta subunit and a small pyruvoyl-containing alpha subunit. Pyruvate is required as a cofactor. Is synthesized initially as an inactive proenzyme. Formation of the active enzyme involves a self-maturation process in which the active site pyruvoyl group is generated from an internal serine residue via an autocatalytic post-translational modification. Two non-identical subunits are generated from the proenzyme in this reaction, and the pyruvate is formed at the N-terminus of the alpha chain, which is derived from the carboxyl end of the proenzyme. The autoendoproteolytic cleavage occurs by a canonical serine protease mechanism, in which the side chain hydroxyl group of the serine supplies its oxygen atom to form the C-terminus of the beta chain, while the remainder of the serine residue undergoes an oxidative deamination to produce ammonia and the pyruvoyl prosthetic group on the alpha chain. During this reaction, the Ser that is part of the protease active site of the proenzyme becomes the pyruvoyl prosthetic group, which constitutes an essential element of the active site of the mature decarboxylase.

Its subcellular location is the cell membrane. It carries out the reaction a 1,2-diacyl-sn-glycero-3-phospho-L-serine + H(+) = a 1,2-diacyl-sn-glycero-3-phosphoethanolamine + CO2. It functions in the pathway phospholipid metabolism; phosphatidylethanolamine biosynthesis; phosphatidylethanolamine from CDP-diacylglycerol: step 2/2. Its function is as follows. Catalyzes the formation of phosphatidylethanolamine (PtdEtn) from phosphatidylserine (PtdSer). The chain is Phosphatidylserine decarboxylase proenzyme from Vibrio parahaemolyticus serotype O3:K6 (strain RIMD 2210633).